The sequence spans 241 residues: Large ribosomal subunit protein uL2 (241 aa).

Positions 201–241 are disordered; that stretch reads VDHPHGGGNRQHPGRPTTVSRHAPPGRKVGSIAAKRTGLKR.

It belongs to the universal ribosomal protein uL2 family. Part of the 50S ribosomal subunit. Forms a bridge to the 30S subunit in the 70S ribosome.

In terms of biological role, one of the primary rRNA binding proteins. Required for association of the 30S and 50S subunits to form the 70S ribosome, for tRNA binding and peptide bond formation. It has been suggested to have peptidyltransferase activity; this is somewhat controversial. Makes several contacts with the 16S rRNA in the 70S ribosome. This chain is Large ribosomal subunit protein uL2, found in Methanobrevibacter smithii (strain ATCC 35061 / DSM 861 / OCM 144 / PS).